The sequence spans 407 residues: Aspartokinase (407 aa).

Residue 7-10 coordinates ATP; sequence KFGG. 25 to 30 contacts substrate; sequence RVIEEV. Serine 41 contacts ATP. Substrate contacts are provided by residues 47-49, glutamate 74, 125-126, 150-153, and serine 153; these read TDE, LD, and RGGS. Residues 173 to 174 and 179 to 184 contribute to the ATP site; these read TD and FTTDPR. 2 ACT domains span residues 264 to 338 and 340 to 407; these read VTVV…LAKV and IVGS…AVRS. Residues 289–291, glutamine 295, 351–352, 365–366, and 372–373 each bind substrate; these read NVD, VA, EI, and SE.

This sequence belongs to the aspartokinase family. As to quaternary structure, tetramer consisting of 2 isoforms Alpha (catalytic and regulation) and of a homodimer of 2 isoforms Beta (regulation).

The catalysed reaction is L-aspartate + ATP = 4-phospho-L-aspartate + ADP. Its pathway is amino-acid biosynthesis; L-lysine biosynthesis via DAP pathway; (S)-tetrahydrodipicolinate from L-aspartate: step 1/4. The protein operates within amino-acid biosynthesis; L-methionine biosynthesis via de novo pathway; L-homoserine from L-aspartate: step 1/3. It participates in amino-acid biosynthesis; L-threonine biosynthesis; L-threonine from L-aspartate: step 1/5. With respect to regulation, lysine-sensitive. Functionally, catalyzes the phosphorylation of the beta-carboxyl group of aspartic acid with ATP to yield 4-phospho-L-aspartate, which is involved in the branched biosynthetic pathway leading to the biosynthesis of amino acids threonine, isoleucine and methionine. The polypeptide is Aspartokinase (lysC) (Geobacillus stearothermophilus (Bacillus stearothermophilus)).